Consider the following 387-residue polypeptide: Major outer membrane porin (387 aa).

The N-terminal stretch at 1–22 is a signal peptide; sequence MKKLLKSVLAFAVLGSASSLHA.

Belongs to the chlamydial porin (CP) (TC 1.B.2) family. As to quaternary structure, part of a disulfide cross-linked outer membrane complex (COMC) composed of the major outer membrane porin (MOMP), the small cysteine-rich protein (OmcA) and the large cysteine-rich periplasmic protein (OmcB).

Its subcellular location is the cell outer membrane. In elementary bodies (EBs, the infectious stage, which is able to survive outside the host cell) provides the structural integrity of the outer envelope through disulfide cross-links with the small cysteine-rich protein and the large cysteine-rich periplasmic protein. It has been described in publications as the Sarkosyl-insoluble COMC (Chlamydia outer membrane complex), and serves as the functional equivalent of peptidoglycan. Its function is as follows. Permits diffusion of specific solutes through the outer membrane. In Chlamydia muridarum (strain MoPn / Nigg), this protein is Major outer membrane porin (ompA).